Consider the following 105-residue polypeptide: Heat shock protein HspQ (105 aa).

The protein belongs to the HspQ family.

It is found in the cytoplasm. Functionally, involved in the degradation of certain denaturated proteins, including DnaA, during heat shock stress. This is Heat shock protein HspQ from Salmonella choleraesuis (strain SC-B67).